The primary structure comprises 411 residues: Glutamate dehydrogenase A (411 aa).

Residue Lys-102 is part of the active site.

The protein belongs to the Glu/Leu/Phe/Val dehydrogenases family.

The enzyme catalyses L-glutamate + NAD(+) + H2O = 2-oxoglutarate + NH4(+) + NADH + H(+). The catalysed reaction is L-glutamate + NADP(+) + H2O = 2-oxoglutarate + NH4(+) + NADPH + H(+). This chain is Glutamate dehydrogenase A (GDHA), found in Nicotiana plumbaginifolia (Leadwort-leaved tobacco).